The sequence spans 308 residues: Small ribosomal subunit protein uS5c (308 aa).

Residues 1–55 constitute a chloroplast transit peptide; that stretch reads MATTATTTPSATSLTTLHRRIPLFPTTTTLLSLSSSSKPLFLSLSSTRSFPTHLY. The 64-residue stretch at 152 to 215 folds into the S5 DRBM domain; the sequence is FEENVVQVRR…VDARRNIITV (64 aa).

In terms of assembly, component of the chloroplast small ribosomal subunit (SSU). Mature 70S chloroplast ribosomes of higher plants consist of a small (30S) and a large (50S) subunit. The 30S small subunit contains 1 molecule of ribosomal RNA (16S rRNA) and 24 different proteins. The 50S large subunit contains 3 rRNA molecules (23S, 5S and 4.5S rRNA) and 33 different proteins. uS5c binds directly to 16S ribosomal RNA.

Its subcellular location is the plastid. The protein localises to the chloroplast. Its function is as follows. Component of the chloroplast ribosome (chloro-ribosome), a dedicated translation machinery responsible for the synthesis of chloroplast genome-encoded proteins, including proteins of the transcription and translation machinery and components of the photosynthetic apparatus. The chain is Small ribosomal subunit protein uS5c (rps5) from Spinacia oleracea (Spinach).